The sequence spans 106 residues: Putative double-stranded DNA mimic protein VP1949 (106 aa).

Belongs to the putative dsDNA mimic protein family.

In terms of biological role, may act as a double-stranded DNA (dsDNA) mimic. Probably regulates the activity of a dsDNA-binding protein. This chain is Putative double-stranded DNA mimic protein VP1949, found in Vibrio parahaemolyticus serotype O3:K6 (strain RIMD 2210633).